An 832-amino-acid polypeptide reads, in one-letter code: SID1 transmembrane family member 2 (832 aa).

A signal peptide spans 1–15 (MIAWRLPLCVLLVAA). Topologically, residues 16-293 (VESHLGALGP…VSQAVTSEAY (278 aa)) are extracellular. N27, N54, N60, N123, N141, and N165 each carry an N-linked (GlcNAc...) asparagine glycan. A helical membrane pass occupies residues 294–314 (VGGMLFCLGIFLSFYLLTVLL). Residues 315-447 (ACWENWRQRK…DKRVLRKKYQ (133 aa)) lie on the Cytoplasmic side of the membrane. S401, S403, and S404 each carry phosphoserine. Residues 448–468 (IYFWNIATIAVFYALPVVQLV) form a helical membrane-spanning segment. Over 469-499 (ITYQTVVNVTGNQDICYYNFLCAHPLGNLSA) the chain is Extracellular. N-linked (GlcNAc...) asparagine glycans are attached at residues N476 and N496. The chain crosses the membrane as a helical span at residues 500-520 (FNNILSNLGYILLGLLFLLII). Residues 521–546 (LQREINHNRALLRNDLYALECGIPKH) are Cytoplasmic-facing. The helical transmembrane segment at 547 to 567 (FGLFYAMGTALMMEGLLSACY) threads the bilayer. At 568–605 (HVCPNYTNFQFDTSFMYMIAGLCMLKLYQKRHPDINAS) the chain is on the extracellular side. N-linked (GlcNAc...) asparagine glycosylation is found at N572 and N603. The helical transmembrane segment at 606 to 626 (AYSAYACLAIVIFFSVLGVVF) threads the bilayer. Over 627–631 (GKGNT) the chain is Cytoplasmic. Residues 632–652 (AFWIVFSVIHIISTLLLSTQL) form a helical membrane-spanning segment. The Extracellular portion of the chain corresponds to 653-688 (YYMGRWKLDSGIFRRILHVLYTDCIRQCSGPLYTDR). A helical transmembrane segment spans residues 689–709 (MVLLVMGNIINWSLAAYGLIM). Residues 710 to 715 (RPNDFA) lie on the Cytoplasmic side of the membrane. The chain crosses the membrane as a helical span at residues 716 to 736 (SYLLAIGICNLLLYFAFYIIM). At 737–746 (KLRSGERIKL) the chain is on the extracellular side. Residues 747–767 (IPLLCIVCTSVVWGFALFFFF) traverse the membrane as a helical segment. Residues 768 to 796 (QGLSTWQKTPAESREHNRDCILLDFFDDH) are Cytoplasmic-facing. The helical transmembrane segment at 797-817 (DIWHFLSSIAMFGSFLVLLTL) threads the bilayer. The Extracellular segment spans residues 818–832 (DDDLDTVQRDKIYVF).

It belongs to the SID1 family. Interacts with adapter protein complex 1 (AP-1) and AP-2, but not AP-3 and AP-4. Interacts with LAMP2. In terms of processing, glycosylated. As to expression, highly expressed in the liver, brain, kidney and intestine (at protein level).

It is found in the lysosome membrane. The protein localises to the cell membrane. Functionally, mediates the translocation of RNA and DNA across the lysosomal membrane during RNA and DNA autophagy (RDA), a process in which RNA or DNA is directly imported into lysosomes in an ATP-dependent manner, and degraded. Involved in the uptake of single-stranded oligonucleotides by living cells, a process called gymnosis. In vitro, mediates the uptake of linear DNA more efficiently than that of circular DNA, but exhibits similar uptake efficacy toward RNA and DNA. Binds long double-stranded RNA (dsRNA) (500 - 700 base pairs), but not dsRNA shorter than 100 bp. In Rattus norvegicus (Rat), this protein is SID1 transmembrane family member 2 (Sidt2).